A 136-amino-acid chain; its full sequence is Urease subunit beta (136 aa).

Positions asparagine 113 to serine 136 are disordered.

The protein belongs to the urease beta subunit family. In terms of assembly, heterotrimer of UreA (gamma), UreB (beta) and UreC (alpha) subunits. Three heterotrimers associate to form the active enzyme.

It is found in the cytoplasm. The enzyme catalyses urea + 2 H2O + H(+) = hydrogencarbonate + 2 NH4(+). It functions in the pathway nitrogen metabolism; urea degradation; CO(2) and NH(3) from urea (urease route): step 1/1. The protein is Urease subunit beta of Staphylococcus aureus (strain Newman).